Consider the following 549-residue polypeptide: Small ribosomal subunit protein bS1 (549 aa).

6 consecutive S1 motif domains span residues 21–87 (GSIV…LSRE), 105–171 (KATV…VSRR), 192–260 (GSEV…LGLK), 277–347 (NSKL…LGLK), 364–434 (GDKV…LGIK), and 451–512 (GAVV…LSVK).

It belongs to the bacterial ribosomal protein bS1 family.

In terms of biological role, binds mRNA; thus facilitating recognition of the initiation point. It is needed to translate mRNA with a short Shine-Dalgarno (SD) purine-rich sequence. The chain is Small ribosomal subunit protein bS1 (rpsA) from Haemophilus influenzae (strain ATCC 51907 / DSM 11121 / KW20 / Rd).